An 896-amino-acid chain; its full sequence is Translation initiation factor IF-2 (896 aa).

The segment covering 93-219 (VKRDPQEAER…RMAEENEKNW (127 aa)) has biased composition (basic and acidic residues). Residues 93–307 (VKRDPQEAER…GSALQQGFQK (215 aa)) are disordered. Positions 256–271 (GRSRSSKAARPAKKGN) are enriched in basic residues. Residues 272 to 285 (KHAESKADREEARA) show a composition bias toward basic and acidic residues. Residues 395-564 (PRAPVVTIMG…LLQAEVLELK (170 aa)) form the tr-type G domain. The segment at 404 to 411 (GHVDHGKT) is G1. 404–411 (GHVDHGKT) contributes to the GTP binding site. The interval 429 to 433 (GITQH) is G2. The interval 450–453 (DTPG) is G3. GTP contacts are provided by residues 450-454 (DTPGH) and 504-507 (NKID). The G4 stretch occupies residues 504–507 (NKID). A G5 region spans residues 540 to 542 (SAK).

Belongs to the TRAFAC class translation factor GTPase superfamily. Classic translation factor GTPase family. IF-2 subfamily.

The protein localises to the cytoplasm. One of the essential components for the initiation of protein synthesis. Protects formylmethionyl-tRNA from spontaneous hydrolysis and promotes its binding to the 30S ribosomal subunits. Also involved in the hydrolysis of GTP during the formation of the 70S ribosomal complex. The sequence is that of Translation initiation factor IF-2 from Klebsiella pneumoniae (strain 342).